The following is a 362-amino-acid chain: Very-long-chain (3R)-3-hydroxyacyl-CoA dehydratase 3 (362 aa).

The residue at position 1 (Met-1) is an N-acetylmethionine. Residues 1-149 lie on the Cytoplasmic side of the membrane; that stretch reads MENQVLTPHV…ETLTSLKKGY (149 aa). A CS domain is found at 5 to 94; sequence VLTPHVYWAQ…KESQWWERLT (90 aa). Position 7 is a phosphothreonine (Thr-7). Positions 111–136 form a coiled coil; it reads LDESDAEMELRAKEEEQLNKLRLESQ. Ser-114 and Ser-135 each carry phosphoserine. The chain crosses the membrane as a helical span at residues 150–170; the sequence is LFMYNLVQFLGFSWIFVNMTV. Residues 171–189 lie on the Lumenal side of the membrane; the sequence is RFFILGKESFYDTFHTVAD. Residues 190–210 traverse the membrane as a helical segment; the sequence is MMYFCQMLAAVESINAAIGVT. Residues 211–212 lie on the Cytoplasmic side of the membrane; sequence KS. The chain crosses the membrane as a helical span at residues 213-233; it reads PVVPSLFQLLGRNFILFIIFG. Residues 234-242 lie on the Lumenal side of the membrane; that stretch reads TMEEMQNKA. Residues 243–263 form a helical membrane-spanning segment; sequence VVFFVFYIWSTVEIFRYPFYM. Topologically, residues 264-280 are cytoplasmic; it reads LSCIDMDWKVLTWLRYT. Residues 281 to 301 traverse the membrane as a helical segment; the sequence is VWIPLYPMGCLAEAVSVIQSI. Active-site residues include Tyr-286 and Glu-293. The Lumenal segment spans residues 302-325; that stretch reads PVFNETGRFSFTLPYPVKIKVRFS. The chain crosses the membrane as a helical span at residues 326 to 346; sequence FFLQIYLILLFLGLYVNFRYL. The Cytoplasmic portion of the chain corresponds to 347–362; the sequence is YKQRRRRFGQKKKKIH.

This sequence belongs to the very long-chain fatty acids dehydratase HACD family. As to quaternary structure, may interact with enzymes of the ELO family (including ELOVL1); with those enzymes that mediate condensation, the first of the four steps of the reaction cycle responsible for fatty acids elongation, may be part of a larger fatty acids elongase complex. Interacts with RAC1. Associates with internalized insulin receptor/INSR complexes on Golgi/endosomal membranes; HACD3/PTPLAD1 together with ATIC and PRKAA2/AMPK2 is proposed to be part of a signaling network regulating INSR autophosphorylation and endocytosis.

The protein localises to the endoplasmic reticulum membrane. The enzyme catalyses a very-long-chain (3R)-3-hydroxyacyl-CoA = a very-long-chain (2E)-enoyl-CoA + H2O. It carries out the reaction (3R)-hydroxyhexadecanoyl-CoA = (2E)-hexadecenoyl-CoA + H2O. It functions in the pathway lipid metabolism; fatty acid biosynthesis. Catalyzes the third of the four reactions of the long-chain fatty acids elongation cycle. This endoplasmic reticulum-bound enzymatic process, allows the addition of two carbons to the chain of long- and very long-chain fatty acids/VLCFAs per cycle. This enzyme catalyzes the dehydration of the 3-hydroxyacyl-CoA intermediate into trans-2,3-enoyl-CoA, within each cycle of fatty acid elongation. Thereby, it participates in the production of VLCFAs of different chain lengths that are involved in multiple biological processes as precursors of membrane lipids and lipid mediators. Involved in Rac1-signaling pathways leading to the modulation of gene expression. Promotes insulin receptor/INSR autophosphorylation and is involved in INSR internalization. This Bos taurus (Bovine) protein is Very-long-chain (3R)-3-hydroxyacyl-CoA dehydratase 3.